The sequence spans 287 residues: Orotidine 5'-phosphate decarboxylase (287 aa).

Residue lysine 95 is the Proton donor of the active site.

The protein belongs to the OMP decarboxylase family. Type 2 subfamily.

The enzyme catalyses orotidine 5'-phosphate + H(+) = UMP + CO2. It participates in pyrimidine metabolism; UMP biosynthesis via de novo pathway; UMP from orotate: step 2/2. This is Orotidine 5'-phosphate decarboxylase from Albidiferax ferrireducens (strain ATCC BAA-621 / DSM 15236 / T118) (Rhodoferax ferrireducens).